A 225-amino-acid polypeptide reads, in one-letter code: Membrane protein (225 aa).

Residues 1–20 (MSNETNCTLDFEQSVELFKE) are Virion surface-facing. Residues 21–41 (YNLFITAFLLFLTIILQYGYA) form a helical membrane-spanning segment. Residues 42-51 (TRIRFIYILK) are Intravirion-facing. A helical membrane pass occupies residues 52–72 (MIVLWCFWPLNIAVGVISCIY). Over 73–77 (PPNTG) the chain is Virion surface. The chain crosses the membrane as a helical span at residues 78–98 (GLVAAIILTVFACLSFVGYWI). Over 99–225 (QSCRLFKRCR…VATGGSSLYT (127 aa)) the chain is Intravirion.

Belongs to the gammacoronaviruses M protein family. As to quaternary structure, homomultimer. Interacts with envelope E protein in the budding compartment of the host cell, which is located between endoplasmic reticulum and the Golgi complex. Forms a complex with HE and S proteins. Interacts with nucleocapsid N protein. This interaction probably participates in RNA packaging into the virus.

The protein localises to the virion membrane. Its subcellular location is the host Golgi apparatus membrane. Functionally, component of the viral envelope that plays a central role in virus morphogenesis and assembly via its interactions with other viral proteins. This Avian infectious bronchitis virus (strain KB8523) (IBV) protein is Membrane protein.